Consider the following 314-residue polypeptide: DNA-directed RNA polymerase subunit alpha (314 aa).

Residues 1 to 228 (MIEIEKPRIE…EHLNIFVSLT (228 aa)) are alpha N-terminal domain (alpha-NTD). Positions 245 to 314 (KEKVLEMSIE…DLGLGLRKED (70 aa)) are alpha C-terminal domain (alpha-CTD).

This sequence belongs to the RNA polymerase alpha chain family. Homodimer. The RNAP catalytic core consists of 2 alpha, 1 beta, 1 beta' and 1 omega subunit. When a sigma factor is associated with the core the holoenzyme is formed, which can initiate transcription.

It catalyses the reaction RNA(n) + a ribonucleoside 5'-triphosphate = RNA(n+1) + diphosphate. Its function is as follows. DNA-dependent RNA polymerase catalyzes the transcription of DNA into RNA using the four ribonucleoside triphosphates as substrates. This Staphylococcus epidermidis (strain ATCC 35984 / DSM 28319 / BCRC 17069 / CCUG 31568 / BM 3577 / RP62A) protein is DNA-directed RNA polymerase subunit alpha.